A 101-amino-acid polypeptide reads, in one-letter code: Small ribosomal subunit protein uS10 (101 aa).

This sequence belongs to the universal ribosomal protein uS10 family. In terms of assembly, part of the 30S ribosomal subunit.

In terms of biological role, involved in the binding of tRNA to the ribosomes. The protein is Small ribosomal subunit protein uS10 of Mycobacterium avium (strain 104).